The following is a 658-amino-acid chain: MREPTNRQGSPGPGEPRPPAQGRPRFPTWILWVALLALALWNVYTFFWPSSGARLNIPYSAFIQQVEGENVSSVTIRGQRVSGTFTEEVRVAGDQVLSPGDPVPPGTSPNEIRTGTQFQTTIPENSQTELVPLLQSHGVTVKIDQAGGSVWPSLLATIVPLFLFIGLMVYLGRSMSRGQQNVFSFGRSKARVYDAERPRVTFADVAGEEEAKAELSEVVDFLRNPMKYHAIGARLPRGILLVGPPGTGKTLLARAVAGEAGVPFFSVSASEFVEMFVGVGASRVRDLFERAKASAPSIMFVDELDAVGRQRFAGLGGGNDEREQTLNQLLVEMDGFEPHQDVIVIAATNRPDVLDPALLRPGRFDRQVTVGLPDRRGREAILRIHTRGIPVADDLDLEELAAATPGFSGADLANLVNEAALMAARKNKKIVERIDFDEALDKIVLGTERAMIMSEHDKRVVAYHEAGHAVAAHFSPGTDPLRKVSIVPRGQSLGVTIQAPEEDRFNYSRAYLLARLTVMMGGRAAEKLVFNEMTTGAQNDLKEATLLARRMVGLWGMSDEVGPVYLGMGEQHVFLGREIMQDRDVAEATLERADEAVQRLLREAMERAEQLLRKYRDKLDALAEALIAEETIGQEKITEILGAPPVPSAAPAAAADSV.

The interval 1–22 is disordered; that stretch reads MREPTNRQGSPGPGEPRPPAQG. Residues 1-28 are Cytoplasmic-facing; it reads MREPTNRQGSPGPGEPRPPAQGRPRFPT. Residues 29–49 form a helical membrane-spanning segment; sequence WILWVALLALALWNVYTFFWP. Topologically, residues 50–149 are extracellular; sequence SSGARLNIPY…TVKIDQAGGS (100 aa). The tract at residues 95–114 is disordered; the sequence is QVLSPGDPVPPGTSPNEIRT. A helical transmembrane segment spans residues 150–170; that stretch reads VWPSLLATIVPLFLFIGLMVY. Over 171–658 the chain is Cytoplasmic; sequence LGRSMSRGQQ…AAPAAAADSV (488 aa). 243 to 250 is an ATP binding site; it reads GPPGTGKT. His-464 serves as a coordination point for Zn(2+). The active site involves Glu-465. Zn(2+) is bound by residues His-468 and Asp-540.

It in the central section; belongs to the AAA ATPase family. In the C-terminal section; belongs to the peptidase M41 family. As to quaternary structure, homohexamer. Zn(2+) is required as a cofactor.

The protein resides in the cell membrane. Acts as a processive, ATP-dependent zinc metallopeptidase for both cytoplasmic and membrane proteins. Plays a role in the quality control of integral membrane proteins. The sequence is that of ATP-dependent zinc metalloprotease FtsH 4 (ftsh4) from Sphaerobacter thermophilus (strain ATCC 49802 / DSM 20745 / KCCM 41009 / NCIMB 13125 / S 6022).